The primary structure comprises 161 residues: Type-1 angiotensin II receptor-associated protein (161 aa).

The Extracellular segment spans residues 1–26; that stretch reads MELPAVNLKVILLVHWLLTTWGCLVF. Residues 27–47 form a helical membrane-spanning segment; sequence SSSYAWGNFTILALGVWAVAQ. The Cytoplasmic portion of the chain corresponds to 48–53; the sequence is RDSIDA. The helical transmembrane segment at 54-74 threads the bilayer; it reads IGMFLGGLVATIFLDIIYISI. At 75–86 the chain is on the extracellular side; that stretch reads FYSSVATGDTGR. The chain crosses the membrane as a helical span at residues 87–107; it reads FGAGMAILSLLLKPFSCCLVY. The Cytoplasmic portion of the chain corresponds to 108–161; sequence HMHRERGGELPLRPDFFGPSQEHSAYQTIDSSSDAAADPFASLENKGQAVPRGY. An interaction with AGTR1 region spans residues 110-122; that stretch reads HRERGGELPLRPD. Position 127 is a phosphoserine (Ser-127). Thr-135 is modified (phosphothreonine). Residue Ser-138 is modified to Phosphoserine.

As to quaternary structure, interacts with RACK1, and with the C-terminal region of AGTR1. As to expression, ubiquitous but more abundant in kidney, testis and heart.

The protein localises to the endoplasmic reticulum membrane. Its subcellular location is the golgi apparatus membrane. It localises to the cytoplasmic vesicle membrane. In terms of biological role, appears to be a negative regulator of type-1 angiotensin II receptor-mediated signaling by regulating receptor internalization as well as mechanism of receptor desensitization such as phosphorylation. Also induces a decrease in angiotensin II-stimulated transcriptional activity. May play a role of negative regulator in cardiomyocyte hypertrophy induced by angiotensin II through an inhibition of p38 mitogen-activated protein kinase pathway. The polypeptide is Type-1 angiotensin II receptor-associated protein (Agtrap) (Mus musculus (Mouse)).